Consider the following 141-residue polypeptide: Large ribosomal subunit protein uL11 (141 aa).

The protein belongs to the universal ribosomal protein uL11 family. In terms of assembly, part of the ribosomal stalk of the 50S ribosomal subunit. Interacts with L10 and the large rRNA to form the base of the stalk. L10 forms an elongated spine to which L12 dimers bind in a sequential fashion forming a multimeric L10(L12)X complex. In terms of processing, one or more lysine residues are methylated.

In terms of biological role, forms part of the ribosomal stalk which helps the ribosome interact with GTP-bound translation factors. The sequence is that of Large ribosomal subunit protein uL11 from Gloeobacter violaceus (strain ATCC 29082 / PCC 7421).